The chain runs to 383 residues: Sulfate adenylyltransferase (383 aa).

This sequence belongs to the sulfate adenylyltransferase family.

The catalysed reaction is sulfate + ATP + H(+) = adenosine 5'-phosphosulfate + diphosphate. It functions in the pathway sulfur metabolism; hydrogen sulfide biosynthesis; sulfite from sulfate: step 1/3. This chain is Sulfate adenylyltransferase, found in Halothermothrix orenii (strain H 168 / OCM 544 / DSM 9562).